The chain runs to 263 residues: 3-methyl-2-oxobutanoate hydroxymethyltransferase 2 (263 aa).

2 residues coordinate Mg(2+): D45 and D84. Residues 45-46 (DS), D84, and K112 contribute to the 3-methyl-2-oxobutanoate site. Residue E114 coordinates Mg(2+). E181 functions as the Proton acceptor in the catalytic mechanism.

Belongs to the PanB family. Homodecamer; pentamer of dimers. Requires Mg(2+) as cofactor.

Its subcellular location is the cytoplasm. It catalyses the reaction 3-methyl-2-oxobutanoate + (6R)-5,10-methylene-5,6,7,8-tetrahydrofolate + H2O = 2-dehydropantoate + (6S)-5,6,7,8-tetrahydrofolate. It functions in the pathway cofactor biosynthesis; (R)-pantothenate biosynthesis; (R)-pantoate from 3-methyl-2-oxobutanoate: step 1/2. Catalyzes the reversible reaction in which hydroxymethyl group from 5,10-methylenetetrahydrofolate is transferred onto alpha-ketoisovalerate to form ketopantoate. In Aliivibrio fischeri (strain ATCC 700601 / ES114) (Vibrio fischeri), this protein is 3-methyl-2-oxobutanoate hydroxymethyltransferase 2.